A 472-amino-acid chain; its full sequence is Eukaryotic translation initiation factor 2 subunit 3, X-linked (472 aa).

The residue at position 2 (alanine 2) is an N-acetylalanine. Residue serine 16 is modified to Phosphoserine. Residues 39 to 248 enclose the tr-type G domain; that stretch reads QATINIGTIG…IVKKIPVPPR (210 aa). Positions 48–55 are G1; the sequence is GHVAHGKS. 51-56 is a binding site for GTP; it reads AHGKST. The G2 stretch occupies residues 76–80; sequence NITIK. The tract at residues 134-137 is G3; that stretch reads DCPG. GTP contacts are provided by residues 190–193 and 225–227; these read NKID and SAQ. The G4 stretch occupies residues 190–193; the sequence is NKID. The segment at 225-227 is G5; that stretch reads SAQ. The segment at 457 to 469 is interacts with Cdc123; sequence GQIRRGVTIKPTV.

The protein belongs to the TRAFAC class translation factor GTPase superfamily. Classic translation factor GTPase family. EIF2G subfamily. Eukaryotic translation initiation factor 2 eIF2 is a heterotrimeric complex composed of an alpha (EIF2S1), a beta (EIF2S2) and a gamma (EIF2S3) chain. eIF2 is member of the 43S pre-initiation complex (43S PIC). Interacts (via C-terminus) with CDC123; the interaction is direct. In terms of tissue distribution, widely expressed.

The protein localises to the cytoplasm. It is found in the cytosol. It catalyses the reaction GTP + H2O = GDP + phosphate + H(+). Functionally, member of the eIF2 complex that functions in the early steps of protein synthesis by forming a ternary complex with GTP and initiator tRNA. This complex binds to a 40S ribosomal subunit, followed by mRNA binding to form the 43S pre-initiation complex (43S PIC). Junction of the 60S ribosomal subunit to form the 80S initiation complex is preceded by hydrolysis of the GTP bound to eIF2 and release of an eIF2-GDP binary complex. In order for eIF2 to recycle and catalyze another round of initiation, the GDP bound to eIF2 must exchange with GTP by way of a reaction catalyzed by eIF-2B. Along with its paralog on chromosome Y, may contribute to spermatogenesis up to the round spermatid stage. The polypeptide is Eukaryotic translation initiation factor 2 subunit 3, X-linked (Eif2s3) (Rattus norvegicus (Rat)).